The sequence spans 566 residues: Solute carrier family 22 member 16 (566 aa).

The helical transmembrane segment at F20–A40 threads the bilayer. 3 N-linked (GlcNAc...) asparagine glycosylation sites follow: N52, N60, and N112. 5 consecutive transmembrane segments (helical) span residues L149 to A169, P176 to F196, F201 to V221, M237 to V257, and W261 to L281. N344 is a glycosylation site (N-linked (GlcNAc...) asparagine). 6 consecutive transmembrane segments (helical) span residues T351 to N371, L381 to M401, N408 to P428, I436 to Y456, L468 to V488, and V493 to T513.

The protein belongs to the major facilitator (TC 2.A.1) superfamily. Organic cation transporter (TC 2.A.1.19) family.

The protein localises to the membrane. High affinity carnitine transporter. The polypeptide is Solute carrier family 22 member 16 (slc22a16) (Xenopus laevis (African clawed frog)).